Reading from the N-terminus, the 556-residue chain is Arginine--tRNA ligase (556 aa).

Positions 132–142 match the 'HIGH' region motif; the sequence is ANPTGDLHLGH.

Belongs to the class-I aminoacyl-tRNA synthetase family. In terms of assembly, monomer.

Its subcellular location is the cytoplasm. It catalyses the reaction tRNA(Arg) + L-arginine + ATP = L-arginyl-tRNA(Arg) + AMP + diphosphate. The protein is Arginine--tRNA ligase of Bacillus cereus (strain ATCC 10987 / NRS 248).